We begin with the raw amino-acid sequence, 46 residues long: Lantibiotic streptin (46 aa).

A propeptide spanning residues 1-24 (MNNTIKDFDLDLKTNKKDTATPYV) is cleaved from the precursor.

Belongs to the type A lantibiotic family. Post-translationally, maturation of lantibiotics involves the enzymatic conversion of Thr, and Ser into dehydrated AA and the formation of thioether bonds with cysteine. This is followed by membrane translocation and cleavage of the modified precursor.

Its function is as follows. Lanthionine-containing peptide antibiotic (lantibiotic) active on certain Gram-positive bacteria. The bactericidal activity of lantibiotics is based on depolarization of energized bacterial cytoplasmic membranes, initiated by the formation of aqueous transmembrane pores. This chain is Lantibiotic streptin (srtA), found in Streptococcus pyogenes serotype M1.